The following is a 734-amino-acid chain: Polyribonucleotide nucleotidyltransferase (734 aa).

Positions 505 and 511 each coordinate Mg(2+). In terms of domain architecture, KH spans 572–631 (PKLTTIQIPVDAIGMVIGKGGETIRSITEETGAEINIEDDGTVTIASASGEGASAALETI). Residues 641–715 (GTVYSGKVRD…GKTRFALSIK (75 aa)) enclose the S1 motif domain.

The protein belongs to the polyribonucleotide nucleotidyltransferase family. Mg(2+) serves as cofactor.

It localises to the cytoplasm. It catalyses the reaction RNA(n+1) + phosphate = RNA(n) + a ribonucleoside 5'-diphosphate. Functionally, involved in mRNA degradation. Catalyzes the phosphorolysis of single-stranded polyribonucleotides processively in the 3'- to 5'-direction. The polypeptide is Polyribonucleotide nucleotidyltransferase (Prosthecochloris aestuarii (strain DSM 271 / SK 413)).